A 113-amino-acid polypeptide reads, in one-letter code: UPF0339 protein MS1092 (113 aa).

2 repeat units span residues 11–59 (AKDG…NFEF) and 62–110 (NKNG…IKDI).

Belongs to the UPF0339 family. Duplicated subfamily.

In Mannheimia succiniciproducens (strain KCTC 0769BP / MBEL55E), this protein is UPF0339 protein MS1092.